Here is an 843-residue protein sequence, read N- to C-terminus: Neuroligin-1 (843 aa).

The signal sequence occupies residues 1 to 45 (MALPRCMWPNYVWRAMMACVVHRGSGAPLTLCLLGCLLQTFHVLS). The Extracellular segment spans residues 46–697 (QKLDDVDPLV…DQRDYSTELS (652 aa)). A glycan (N-linked (GlcNAc...) (complex) asparagine) is linked at Asn-109. Residues Cys-117 and Cys-153 are joined by a disulfide bond. The tract at residues 167-190 (LTKKHTDDLGDNDGAEDEDIRDSG) is disordered. Acidic residues predominate over residues 175–186 (LGDNDGAEDEDI). Residues Asn-303 and Asn-343 are each glycosylated (N-linked (GlcNAc...) (complex) asparagine). Intrachain disulfides connect Cys-342-Cys-353 and Cys-512-Cys-546. Residue Asn-547 is glycosylated (N-linked (GlcNAc...) asparagine). The interval 647–688 (TKVPSTDITLRPTRKNSTPVTSAFPTAKQDDPKQQPSPFSVD) is disordered. Over residues 661-670 (KNSTPVTSAF) the composition is skewed to polar residues. Ser-683 and Ser-686 each carry an O-linked (GalNAc...) serine glycan. The helical transmembrane segment at 698 to 718 (VTIAVGASLLFLNILAFAALY) threads the bilayer. Topologically, residues 719–843 (YKKDKRRHDV…HPHSHSTTRV (125 aa)) are cytoplasmic. A disordered region spans residues 822–843 (GGQNNTLPHPHPHPHSHSTTRV). The span at 831–843 (PHPHPHSHSTTRV) shows a compositional bias: basic residues.

The protein belongs to the type-B carboxylesterase/lipase family. As to quaternary structure, interacts with neurexins NRXN1, NRXN2 and NRXN3. Interaction with neurexins is mediated by heparan sulfate glycan modification on neurexin. Interacts (via its C-terminus) with DLG4/PSD-95 (via PDZ domain 3). Interacts with AIP1, GOPC and PDZRN3. Interacts with NLGN3. As to expression, brain and arteries (at protein level). Expressed in olfactory bulb. Detected in brain.

The protein resides in the cell membrane. Its subcellular location is the postsynaptic density. It is found in the synaptic cleft. It localises to the synaptic cell membrane. Cell surface protein involved in cell-cell-interactions via its interactions with neurexin family members. Plays a role in synapse function and synaptic signal transmission, and probably mediates its effects by recruiting and clustering other synaptic proteins. May promote the initial formation of synapses, but is not essential for this. In vitro, triggers the de novo formation of presynaptic structures. May be involved in specification of excitatory synapses. Required to maintain wakefulness quality and normal synchrony of cerebral cortex activity during wakefulness and sleep. The protein is involved in nervous system development. The sequence is that of Neuroligin-1 (Nlgn1) from Mus musculus (Mouse).